Here is a 179-residue protein sequence, read N- to C-terminus: Large ribosomal subunit protein bL17 (179 aa).

Positions 123–179 are disordered; the sequence is RTRGTDTLPDTVTDTGPDSAPDPVPGSEPGSAAGDLPDADTAPADPGESSSNQRVIR. The span at 154 to 168 shows a compositional bias: low complexity; the sequence is AAGDLPDADTAPADP. Over residues 170–179 the composition is skewed to polar residues; that stretch reads ESSSNQRVIR.

Belongs to the bacterial ribosomal protein bL17 family. Part of the 50S ribosomal subunit. Contacts protein L32.

The polypeptide is Large ribosomal subunit protein bL17 (Tropheryma whipplei (strain Twist) (Whipple's bacillus)).